The primary structure comprises 160 residues: Endoribonuclease YbeY (160 aa).

Residues His125, His129, and His135 each contribute to the Zn(2+) site.

This sequence belongs to the endoribonuclease YbeY family. Zn(2+) serves as cofactor.

The protein localises to the cytoplasm. Functionally, single strand-specific metallo-endoribonuclease involved in late-stage 70S ribosome quality control and in maturation of the 3' terminus of the 16S rRNA. The protein is Endoribonuclease YbeY of Leuconostoc mesenteroides subsp. mesenteroides (strain ATCC 8293 / DSM 20343 / BCRC 11652 / CCM 1803 / JCM 6124 / NCDO 523 / NBRC 100496 / NCIMB 8023 / NCTC 12954 / NRRL B-1118 / 37Y).